Consider the following 336-residue polypeptide: GTPase Obg (336 aa).

Residues 1–159 (MKFLDETKVY…KTIWLRLKLI (159 aa)) enclose the Obg domain. One can recognise an OBG-type G domain in the interval 160-327 (ADAGLVGLPN…TLRALRSVID (168 aa)). Residues 166–173 (GLPNAGKS), 191–195 (FTTLH), 212–215 (DIPG), 279–282 (SQID), and 308–310 (SAV) contribute to the GTP site. The Mg(2+) site is built by serine 173 and threonine 193.

This sequence belongs to the TRAFAC class OBG-HflX-like GTPase superfamily. OBG GTPase family. As to quaternary structure, monomer. The cofactor is Mg(2+).

It is found in the cytoplasm. Its function is as follows. An essential GTPase which binds GTP, GDP and possibly (p)ppGpp with moderate affinity, with high nucleotide exchange rates and a fairly low GTP hydrolysis rate. Plays a role in control of the cell cycle, stress response, ribosome biogenesis and in those bacteria that undergo differentiation, in morphogenesis control. The sequence is that of GTPase Obg from Sinorhizobium medicae (strain WSM419) (Ensifer medicae).